The sequence spans 426 residues: 3-isopropylmalate dehydratase large subunit (426 aa).

[4Fe-4S] cluster contacts are provided by cysteine 307, cysteine 367, and cysteine 370.

Belongs to the aconitase/IPM isomerase family. LeuC type 2 subfamily. Heterodimer of LeuC and LeuD. [4Fe-4S] cluster serves as cofactor.

The enzyme catalyses (2R,3S)-3-isopropylmalate = (2S)-2-isopropylmalate. Its pathway is amino-acid biosynthesis; L-leucine biosynthesis; L-leucine from 3-methyl-2-oxobutanoate: step 2/4. Its function is as follows. Catalyzes the isomerization between 2-isopropylmalate and 3-isopropylmalate, via the formation of 2-isopropylmaleate. In Aliarcobacter butzleri (strain RM4018) (Arcobacter butzleri), this protein is 3-isopropylmalate dehydratase large subunit.